The chain runs to 207 residues: Nucleoplasmin-2 (207 aa).

Residues 1 to 15 are compositionally biased toward polar residues; the sequence is MSRHSTSSVTETTAK. 2 disordered regions span residues 1-20 and 121-207; these read MSRH…MLWG and DLTW…VTKK. Positions 123–147 are enriched in acidic residues; sequence TWEDDEEEEEEEEEEDEDEDADISL. The segment at 129–152 is acidic tract A2; sequence EEEEEEEEEDEDEDADISLEEIPV. Positions 165–180 match the Bipartite nuclear localization signal motif; sequence SIAKKKKVEKEEDETV. The segment covering 198-207 has biased composition (basic residues); that stretch reads PRAKKPVTKK.

It belongs to the nucleoplasmin family. In terms of assembly, homopentamer, when bound to H2A-H2B dimers only. Homodecamer of two stacked pentamers, when bound to H2A-H2B dimers and H3-H4 tetramers simultaneously. In terms of tissue distribution, ovary specific.

Its subcellular location is the nucleus. Its function is as follows. Core histones chaperone involved in chromatin reprogramming, specially during fertilization and early embryonic development. Probably involved in sperm DNA decondensation during fertilization. This chain is Nucleoplasmin-2 (Npm2), found in Mus musculus (Mouse).